A 366-amino-acid chain; its full sequence is Zinc transporter ZIP13 (366 aa).

Residues 1 to 5 (MTKQK) are Lumenal-facing. The helical transmembrane segment at 6-26 (LLLNGTFSLILIVACEAQQLP) threads the bilayer. Over 27-57 (RSHAASSSGPLCEKEAESWGNLLSSERLDAW) the chain is Cytoplasmic. Residues 58-78 (ICSLIGSFMVGLSGIFPLLVI) form a helical membrane-spanning segment. The Lumenal segment spans residues 79–97 (PFETGAALRSEAGSRRLKQ). Residues 98–118 (LLSFAIGGLLGNVFLHLLPEA) form a helical membrane-spanning segment. Residues 119–137 (WAYTCSAAAGEGQSFQQQK) are Cytoplasmic-facing. The helical transmembrane segment at 138–158 (LLGLWVIIGFLTFLALEKIFL) threads the bilayer. The Lumenal portion of the chain corresponds to 159 to 225 (EKEEEECPGV…NRIKISGYLN (67 aa)). Positions 183–205 (SGYPPSKVAGKSQRAEKNSTQCN) are disordered. The helical transmembrane segment at 226–246 (LLANTIDNFTHGLAVAASFLV) threads the bilayer. The Cytoplasmic portion of the chain corresponds to 247-282 (SRKVGFLTTMAILLHEIPHEVGDFAILLRAGFDRWS). The XEXPHE-motif motif lies at 261-266 (HEIPHE). The chain crosses the membrane as a helical span at residues 283-303 (AAKMQLSTALGGIVGACFAIC). Over 304 to 313 (AQSPKGAGET) the chain is Lumenal. A helical membrane pass occupies residues 314 to 334 (VAWILPFTSGGFLYIALVNVV). At 335–343 (PDLLEEKNP) the chain is on the cytoplasmic side. The helical transmembrane segment at 344-364 (WNSLQQILLLCTGITVMVLLA) threads the bilayer. The Lumenal segment spans residues 365–366 (HN).

It belongs to the ZIP transporter (TC 2.A.5) family. In terms of assembly, homodimer.

It is found in the golgi apparatus membrane. Its subcellular location is the cytoplasmic vesicle membrane. It localises to the endoplasmic reticulum membrane. The enzyme catalyses Zn(2+)(in) = Zn(2+)(out). In terms of biological role, functions as a zinc transporter transporting Zn(2+) from the Golgi apparatus to the cytosol and thus influences the zinc level at least in areas of the cytosol. The sequence is that of Zinc transporter ZIP13 from Gallus gallus (Chicken).